A 708-amino-acid polypeptide reads, in one-letter code: C-Jun-amino-terminal kinase-interacting protein 1 (708 aa).

Positions 1–26 (MAERESGLSGGAASPPAASPFLGLHI) are disordered. Residues 11–24 (GAASPPAASPFLGL) are compositionally biased toward low complexity. Residues Ser-14, Ser-28, and Ser-39 each carry the phosphoserine modification. Residues 69 to 368 (PPRAGLLSAG…PPRASLSSDT (300 aa)) form a disordered region. Residues 71–87 (RAGLLSAGSSGSAGSRL) show a composition bias toward low complexity. The residue at position 103 (Thr-103) is a Phosphothreonine; by MAPK8, MAPK9 and MAPK10. Positions 105–116 (GAEDDEEDDDEL) are enriched in acidic residues. The tract at residues 126-282 (SKAESGQEPA…EATEEIYLTP (157 aa)) is JNK-binding domain (JBD). At Ser-149 the chain carries Phosphoserine. The minimal inhibitory domain (MID) stretch occupies residues 154–173 (RPKRPTTLNLFPQVPRSQDT). Residues 159–179 (TTLNLFPQVPRSQDTLNNNSL) show a composition bias toward polar residues. Ser-178, Ser-184, Ser-190, Ser-192, and Ser-193 each carry phosphoserine. The span at 191–201 (RSSSPLKTGEQ) shows a compositional bias: polar residues. Position 202 is a phosphothreonine; by MAPK8, MAPK9 and MAPK10 (Thr-202). Ser-211 bears the Phosphoserine mark. Residues 220–232 (PVPTQDRGTSTDS) show a composition bias toward polar residues. Residues 264–274 (IHYQADVRLEA) are compositionally biased toward basic and acidic residues. An interaction with MAP3K7 region spans residues 280–468 (LTPVQRPPDP…NVFMSGRSRS (189 aa)). Positions 292-308 (PTSTFLPPTESRMSVSS) are enriched in polar residues. Ser-308, Ser-325, Ser-327, Ser-337, Ser-352, Ser-363, Ser-366, Ser-404, and Ser-406 each carry phosphoserine. Short sequence motifs (D-box) lie at residues 350–357 (RGSLGEPP) and 361–369 (RASLSSDTS). The residue at position 408 (Thr-408) is a Phosphothreonine. The interval 426 to 448 (EEYEEAPQPRPPTCLSEDSTPDE) is disordered. Ser-441 and Ser-444 each carry phosphoserine. At Thr-445 the chain carries Phosphothreonine. Residues Ser-466, Ser-468, Ser-469, and Ser-470 each carry the phosphoserine modification. Residues 468 to 657 (SSSAESFGLF…PKNNKYFGFI (190 aa)) are interaction with VRK2. The 62-residue stretch at 485 to 546 (EHEQTHRAIF…PAYYAIEVTK (62 aa)) folds into the SH3 domain. Positions 558–697 (SDWIDQFRVK…FQQFYKQFVE (140 aa)) constitute a PID domain.

Belongs to the JIP scaffold family. As to quaternary structure, forms homo- or heterooligomeric complexes. Binds specific components of the JNK signaling pathway namely MAPK8/JNK1, MAPK9/JNK2, MAPK10/JNK3, MAP2K7/MKK7, MAP3K11/MLK3 and DLK1. Also binds the proline-rich domain-containing splice variant of apolipoprotein E receptor 2 (ApoER2). Interacts, via the PID domain, with ARHGEF28. Binds the cytoplasmic tails of LRP1 and LRP2 (Megalin). Binds the TPR motif-containing C-terminal of kinesin light chain, KLC1. Pre-assembled MAPK8IP1 scaffolding complexes are then transported as a cargo of kinesin, to the required subcellular location. Interacts with the cytoplasmic domain of APP. Interacts with DCLK2, VRK2 and MAP3K7/TAK1. Found in a complex with SH3RF1, RAC1, MAP3K11/MLK3, MAP2K7/MKK7 and MAPK8/JNK1. Found in a complex with SH3RF1, RAC2, MAP3K7/TAK1, MAP2K7/MKK7, MAPK8/JNK1 and MAPK9/JNK2. Interacts with SH3RF2. In terms of processing, phosphorylated by MAPK8, MAPK9 and MAPK10. Phosphorylation on Thr-103 is also necessary for the dissociation and activation of MAP3K12. Phosphorylated by VRK2. Hyperphosphorylated during mitosis following activation of stress-activated and MAP kinases. Post-translationally, ubiquitinated. Two preliminary events are required to prime for ubiquitination; phosphorylation and an increased in intracellular calcium concentration. Then, the calcium influx initiates ubiquitination and degradation by the ubiquitin-proteasome pathway. As to expression, highly expressed in brain and pancreatic beta-cells. Weaker expression found in kidney.

It is found in the cytoplasm. Its subcellular location is the perinuclear region. The protein localises to the nucleus. It localises to the endoplasmic reticulum membrane. The protein resides in the mitochondrion membrane. In terms of biological role, the JNK-interacting protein (JIP) group of scaffold proteins selectively mediates JNK signaling by aggregating specific components of the MAPK cascade to form a functional JNK signaling module. Required for JNK activation in response to excitotoxic stress. Cytoplasmic MAPK8IP1 causes inhibition of JNK-regulated activity by retaining JNK in the cytoplasm and thus inhibiting the JNK phosphorylation of c-Jun. May also participate in ApoER2-specific reelin signaling. Directly, or indirectly, regulates GLUT2 gene expression and beta-cell function. Appears to have a role in cell signaling in mature and developing nerve terminals. May function as a regulator of vesicle transport, through interactions with the JNK-signaling components and motor proteins. Functions as an anti-apoptotic protein and whose level seems to influence the beta-cell death or survival response. Acts as a scaffold protein that coordinates with SH3RF1 in organizing different components of the JNK pathway, including RAC1 or RAC2, MAP3K11/MLK3 or MAP3K7/TAK1, MAP2K7/MKK7, MAPK8/JNK1 and/or MAPK9/JNK2 into a functional multiprotein complex to ensure the effective activation of the JNK signaling pathway. Regulates the activation of MAPK8/JNK1 and differentiation of CD8(+) T-cells. The chain is C-Jun-amino-terminal kinase-interacting protein 1 (Mapk8ip1) from Rattus norvegicus (Rat).